A 349-amino-acid polypeptide reads, in one-letter code: 4-hydroxythreonine-4-phosphate dehydrogenase (349 aa).

Residues histidine 141 and threonine 142 each contribute to the substrate site. Positions 176, 221, and 276 each coordinate a divalent metal cation. Residues lysine 284, asparagine 293, and arginine 302 each coordinate substrate.

The protein belongs to the PdxA family. As to quaternary structure, homodimer. Requires Zn(2+) as cofactor. It depends on Mg(2+) as a cofactor. Co(2+) is required as a cofactor.

It is found in the cytoplasm. The catalysed reaction is 4-(phosphooxy)-L-threonine + NAD(+) = 3-amino-2-oxopropyl phosphate + CO2 + NADH. The protein operates within cofactor biosynthesis; pyridoxine 5'-phosphate biosynthesis; pyridoxine 5'-phosphate from D-erythrose 4-phosphate: step 4/5. Its function is as follows. Catalyzes the NAD(P)-dependent oxidation of 4-(phosphooxy)-L-threonine (HTP) into 2-amino-3-oxo-4-(phosphooxy)butyric acid which spontaneously decarboxylates to form 3-amino-2-oxopropyl phosphate (AHAP). The sequence is that of 4-hydroxythreonine-4-phosphate dehydrogenase from Methylorubrum populi (strain ATCC BAA-705 / NCIMB 13946 / BJ001) (Methylobacterium populi).